Consider the following 251-residue polypeptide: Ly6/PLAUR domain-containing protein 5 (251 aa).

The N-terminal stretch at 1 to 25 (MAMGVPRVILLCLFGAALCLTGSQA) is a signal peptide. N-linked (GlcNAc...) asparagine glycans are attached at residues Asn120 and Asn174. The 80-residue stretch at 135-214 (CYACIGVHQD…GSCCEGYLCN (80 aa)) folds into the UPAR/Ly6 domain. A lipid anchor (GPI-anchor amidated alanine) is attached at Ala225. Positions 226 to 251 (SATTPPRALQVLALLLPVLLLVGLSA) are cleaved as a propeptide — removed in mature form.

It localises to the cell membrane. The polypeptide is Ly6/PLAUR domain-containing protein 5 (LYPD5) (Homo sapiens (Human)).